Here is a 394-residue protein sequence, read N- to C-terminus: Anthocyanidin 3-O-glucosyltransferase 6 (394 aa).

D37 (charge relay) is an active-site residue. Residues T59, A267, Q269, H284, W287, N288, S289, and E292 each coordinate UDP-alpha-D-glucose. An anthocyanidin is bound at residue A307. UDP-alpha-D-glucose is bound by residues E308 and Q309.

This sequence belongs to the UDP-glycosyltransferase family. As to expression, expressed in cotyledons and leaves.

The catalysed reaction is an anthocyanidin + UDP-alpha-D-glucose + H(+) = an anthocyanidin 3-O-beta-D-glucoside + UDP. Its pathway is pigment biosynthesis; anthocyanin biosynthesis. Functionally, in the presence of other necessary color factors, this glycosylation reaction allows the accumulation of anthocyanin pigments. May be involved in glycosylation of unstable cyanohydrins to produce stable cyanoglucosides. This is Anthocyanidin 3-O-glucosyltransferase 6 (GT6) from Manihot esculenta (Cassava).